Consider the following 47-residue polypeptide: Large ribosomal subunit protein bL34 (47 aa).

It belongs to the bacterial ribosomal protein bL34 family.

The sequence is that of Large ribosomal subunit protein bL34 from Mycobacterium sp. (strain JLS).